The primary structure comprises 372 residues: NAD(P)H-quinone oxidoreductase subunit 1, chloroplastic (372 aa).

A run of 8 helical transmembrane segments spans residues 28-48, 65-85, 97-117, 128-148, 166-186, 254-274, 312-332, and 352-372; these read IWICIPILVVVLGSTLGVLVI, PEYAGPLGIIQALIDGLKLIL, WLFTLGPAIVVIPIVLSYLVV, IGIGIFFWIAISSVAPMGLLI, AAQAISYEIPLALCVLAIILM, FGLFYVASYINLLVSALFVSV, GIIGLGITLVKAYIFLFLAVL, and FLLPVCLGNLLLTASFQITLL.

The protein belongs to the complex I subunit 1 family. NDH is composed of at least 16 different subunits, 5 of which are encoded in the nucleus.

It localises to the plastid. The protein localises to the chloroplast thylakoid membrane. The enzyme catalyses a plastoquinone + NADH + (n+1) H(+)(in) = a plastoquinol + NAD(+) + n H(+)(out). The catalysed reaction is a plastoquinone + NADPH + (n+1) H(+)(in) = a plastoquinol + NADP(+) + n H(+)(out). Functionally, NDH shuttles electrons from NAD(P)H:plastoquinone, via FMN and iron-sulfur (Fe-S) centers, to quinones in the photosynthetic chain and possibly in a chloroplast respiratory chain. The immediate electron acceptor for the enzyme in this species is believed to be plastoquinone. Couples the redox reaction to proton translocation, and thus conserves the redox energy in a proton gradient. The polypeptide is NAD(P)H-quinone oxidoreductase subunit 1, chloroplastic (Staurastrum punctulatum (Green alga)).